Consider the following 34-residue polypeptide: Photosystem I reaction center subunit XII (34 aa).

A helical membrane pass occupies residues 11-31; the sequence is VAIAFVVALIAGIAALLLSTA.

The protein belongs to the PsaM family. In terms of assembly, the G.violaceus PSI reaction center is composed of one copy each of PsaA,B,C,D,E,F,L,M and Z, and forms trimeric complexes.

It is found in the cell inner membrane. The polypeptide is Photosystem I reaction center subunit XII (Gloeobacter violaceus (strain ATCC 29082 / PCC 7421)).